Reading from the N-terminus, the 349-residue chain is Histidinol-phosphate aminotransferase (349 aa).

The segment at 1 to 22 (MVSIRPSVRHTPAYVPGEQPQT) is disordered. Residue Lys-207 is modified to N6-(pyridoxal phosphate)lysine.

The protein belongs to the class-II pyridoxal-phosphate-dependent aminotransferase family. Histidinol-phosphate aminotransferase subfamily. As to quaternary structure, homodimer. The cofactor is pyridoxal 5'-phosphate.

The catalysed reaction is L-histidinol phosphate + 2-oxoglutarate = 3-(imidazol-4-yl)-2-oxopropyl phosphate + L-glutamate. It participates in amino-acid biosynthesis; L-histidine biosynthesis; L-histidine from 5-phospho-alpha-D-ribose 1-diphosphate: step 7/9. The chain is Histidinol-phosphate aminotransferase (hisC) from Synechocystis sp. (strain ATCC 27184 / PCC 6803 / Kazusa).